The sequence spans 384 residues: Putative glutamate--cysteine ligase 2-2 (384 aa).

It belongs to the glutamate--cysteine ligase type 2 family. YbdK subfamily.

It carries out the reaction L-cysteine + L-glutamate + ATP = gamma-L-glutamyl-L-cysteine + ADP + phosphate + H(+). In terms of biological role, ATP-dependent carboxylate-amine ligase which exhibits weak glutamate--cysteine ligase activity. This Rubrobacter xylanophilus (strain DSM 9941 / JCM 11954 / NBRC 16129 / PRD-1) protein is Putative glutamate--cysteine ligase 2-2.